A 242-amino-acid chain; its full sequence is MDQKMINDLKEQVFQTNLLLPKYGLVIHTWGNVSMIAPNRQFFVIKPSGVSYDKMRAQDMVVVDLDNNVLDTNGLKPSSDTPTHALMYKHCPDIKAIVHTHSTFATSFAQADKPIPCLGTTHADNFFGPIPCTRALSDSEINGAYEHNTGLVILEHLKNNQVDVNACAAILVKEHGSFVWSNKNGKDAVDRALTLEQVAQMALYTQMINPHMKEANPALQQKHYNRKHGKDAYYGQDTKQED.

Residues 31–32, 48–49, and 78–79 each bind substrate; these read GN, SG, and SS. The Zn(2+) site is built by Asp-80, His-99, and His-101. The active-site Proton donor/acceptor is the Asp-124. Zn(2+) is bound at residue His-175. The active-site Proton donor/acceptor is Tyr-234.

This sequence belongs to the aldolase class II family. AraD/FucA subfamily. The cofactor is Zn(2+).

It carries out the reaction L-ribulose 5-phosphate = D-xylulose 5-phosphate. The protein operates within cofactor degradation; L-ascorbate degradation; D-xylulose 5-phosphate from L-ascorbate: step 4/4. Its function is as follows. Catalyzes the isomerization of L-ribulose 5-phosphate to D-xylulose 5-phosphate. Is involved in the anaerobic L-ascorbate utilization. The polypeptide is Probable L-ribulose-5-phosphate 4-epimerase UlaF (Mycoplasma pneumoniae (strain ATCC 29342 / M129 / Subtype 1) (Mycoplasmoides pneumoniae)).